The sequence spans 155 residues: uncharacterized protein (155 aa).

The 150-residue stretch at 6-155 (LRIELGEETN…RDMVRLYLDL (150 aa)) folds into the N-acetyltransferase domain. Residues 69–71 (IAV), 77–82 (KKGFGK), and 111–117 (QLSLYQK) each bind CoA.

Probable N-acetyltransferase. This is an uncharacterized protein from Bacillus subtilis (strain 168).